Consider the following 242-residue polypeptide: Segregation and condensation protein A (242 aa).

Belongs to the ScpA family. As to quaternary structure, component of a cohesin-like complex composed of ScpA, ScpB and the Smc homodimer, in which ScpA and ScpB bind to the head domain of Smc. The presence of the three proteins is required for the association of the complex with DNA.

The protein resides in the cytoplasm. Participates in chromosomal partition during cell division. May act via the formation of a condensin-like complex containing Smc and ScpB that pull DNA away from mid-cell into both cell halves. In Streptococcus pneumoniae (strain Taiwan19F-14), this protein is Segregation and condensation protein A.